Reading from the N-terminus, the 341-residue chain is Nicotinate-nucleotide--dimethylbenzimidazole phosphoribosyltransferase (341 aa).

Glutamate 310 serves as the catalytic Proton acceptor.

It belongs to the CobT family.

It catalyses the reaction 5,6-dimethylbenzimidazole + nicotinate beta-D-ribonucleotide = alpha-ribazole 5'-phosphate + nicotinate + H(+). Its pathway is nucleoside biosynthesis; alpha-ribazole biosynthesis; alpha-ribazole from 5,6-dimethylbenzimidazole: step 1/2. Its function is as follows. Catalyzes the synthesis of alpha-ribazole-5'-phosphate from nicotinate mononucleotide (NAMN) and 5,6-dimethylbenzimidazole (DMB). The protein is Nicotinate-nucleotide--dimethylbenzimidazole phosphoribosyltransferase of Vibrio cholerae serotype O1 (strain ATCC 39315 / El Tor Inaba N16961).